A 185-amino-acid polypeptide reads, in one-letter code: Neuronal vesicle trafficking-associated protein 1 (185 aa).

Over M1 to K82 the chain is Cytoplasmic. A helical; Signal-anchor for type II membrane protein transmembrane segment spans residues V83–Y103. Over K104–A185 the chain is Lumenal. Residues E129–W164 form a required for GRIP1 interaction region.

It belongs to the NSG family. As to quaternary structure, forms a complex with GRIP1, GRIA2 and STX12 through direct interaction with GRIP1; controls the intracellular fate of AMPAR and the endosomal sorting of the GRIA2 subunit toward recycling and membrane targeting. Interacts with STX12. Interacts with APP; could regulate APP processing. Interacts with FAM171A1.

Its subcellular location is the membrane. The protein localises to the golgi apparatus. It localises to the trans-Golgi network membrane. The protein resides in the endosome membrane. It is found in the cell projection. Its subcellular location is the dendrite. The protein localises to the early endosome membrane. It localises to the late endosome membrane. The protein resides in the lysosome lumen. It is found in the recycling endosome membrane. Its subcellular location is the cytoplasmic vesicle membrane. The protein localises to the golgi stack membrane. It localises to the endosome. The protein resides in the multivesicular body membrane. It is found in the endoplasmic reticulum membrane. Plays a role in the recycling mechanism in neurons of multiple receptors, including AMPAR, APP and L1CAM and acts at the level of early endosomes to promote sorting of receptors toward a recycling pathway. Regulates sorting and recycling of GRIA2 through interaction with GRIP1 and then contributes to the regulation of synaptic transmission and plasticity by affecting the recycling and targeting of AMPA receptors to the synapse. Is required for faithful sorting of L1CAM to axons by facilitating trafficking from somatodendritic early endosome or the recycling endosome. In an other hand, induces apoptosis via the activation of CASP3 in response to DNA damage. This Macaca fascicularis (Crab-eating macaque) protein is Neuronal vesicle trafficking-associated protein 1.